Reading from the N-terminus, the 522-residue chain is Target of rapamycin complex 2 subunit MAPKAP1 (522 aa).

The residue at position 2 (A2) is an N-acetylalanine. Positions 2 to 184 are interaction with MAP3K2; the sequence is AFLDNPTIIL…KKIDVYLPLH (183 aa). Positions 2–267 are interaction with NBN; that stretch reads AFLDNPTIIL…GFSTLALVEK (266 aa). A disordered region spans residues 38–59; the sequence is LEKTHPPSVPGDSGSEVQGSSG. T86 is modified (phosphothreonine). A phosphoserine mark is found at S128, S186, S315, and S356. The CRIM domain occupies 139–267; it reads QSILSVRLEQ…GFSTLALVEK (129 aa). The segment at 279 to 353 is SIN1-type RBD; sequence LFVRINAAHG…QNAWEFCLVR (75 aa). The SIN1-type PH domain occupies 382-487; sequence HYKSFKVSMI…IVLKVNYILE (106 aa). R393 contributes to the a 1,2-diacyl-sn-glycero-3-phospho-(1D-myo-inositol-3,4,5-trisphosphate) binding site. Position 398 is a phosphothreonine (T398). 2 residues coordinate a 1,2-diacyl-sn-glycero-3-phospho-(1D-myo-inositol-3,4,5-trisphosphate): K428 and K464. Residues 468 to 522 are interaction with ATF2; the sequence is FESDAATVSEIVLKVNYILESRASTARADYFAQKQRKLNRRTSFSFQKEKKSGQQ. Residue S510 is modified to Phosphoserine.

It belongs to the SIN1 family. In terms of assembly, component of the mechanistic target of rapamycin complex 2 (mTORC2), consisting in two heterotretramers composed of MTOR, MLST8, RICTOR and MAPKAP1/SIN1. The mTORC2 core complex associates with PRR5/PROTOR1 and/or PRR5L/PROTOR2. Contrary to mTORC1, mTORC2 does not bind to and is not sensitive to FKBP12-rapamycin. Interacts with MAP3K2. Interacts with ATF2. Interacts with MAPK8. Interacts with GTP-bound HRAS and KRAS; inhibiting their activity. Interacts with IFNAR2. Phosphorylation at Ser-128 by PKC promotes relocalization to the perinuclear region, where the mTORC2 complex specifically mediates phosphorylation of SGK1. Phosphorylated at Thr-86 by AKT1 or RPS6KB1 in the presence of growth factors; the effect of this phosphorylation is however unclear. According to two studies, phosphorylation at Thr-86 by AKT1 is part of a positive feedback loop that increases mTORC2 activation. According to another study, phosphorylation at Thr-86 and Thr-398 by RPS6KB1 promotes dissociation from the mTORC2 complex, leading to inhibit mTORC2 signaling.

The protein localises to the cell membrane. It is found in the endoplasmic reticulum membrane. Its subcellular location is the early endosome membrane. It localises to the late endosome membrane. The protein resides in the lysosome membrane. The protein localises to the golgi apparatus membrane. It is found in the mitochondrion outer membrane. Its subcellular location is the cytoplasm. It localises to the perinuclear region. The protein resides in the nucleus. With respect to regulation, phosphatidylinositol 3,4,5-trisphosphate (PI(3,4,5)P3) promotes MTOR activation by relieving MAPKAP1/SIN1-mediated inhibition of MTOR that takes place in absence of PI(3,4,5)P3. In terms of biological role, component of the mechanistic target of rapamycin complex 2 (mTORC2), which transduces signals from growth factors to pathways involved in proliferation, cytoskeletal organization, lipogenesis and anabolic output. In response to growth factors, mTORC2 phosphorylates and activates AGC protein kinase family members, including AKT (AKT1, AKT2 and AKT3), PKC (PRKCA, PRKCB and PRKCE) and SGK1. In contrast to mTORC1, mTORC2 is nutrient-insensitive. Within the mTORC2 complex, MAPKAP1/SIN1 acts as a substrate adapter which recognizes and binds AGC protein kinase family members for phosphorylation by MTOR. mTORC2 plays a critical role in AKT1 activation by mediating phosphorylation of different sites depending on the context, such as 'Thr-450', 'Ser-473', 'Ser-477' or 'Thr-479', facilitating the phosphorylation of the activation loop of AKT1 on 'Thr-308' by PDPK1/PDK1 which is a prerequisite for full activation. mTORC2 catalyzes the phosphorylation of SGK1 at 'Ser-422' and of PRKCA on 'Ser-657'. The mTORC2 complex also phosphorylates various proteins involved in insulin signaling, such as FBXW8 and IGF2BP1. mTORC2 acts upstream of Rho GTPases to regulate the actin cytoskeleton, probably by activating one or more Rho-type guanine nucleotide exchange factors. mTORC2 promotes the serum-induced formation of stress-fibers or F-actin. MAPKAP1 inhibits MAP3K2 by preventing its dimerization and autophosphorylation. Inhibits HRAS and KRAS independently of mTORC2 complex. Enhances osmotic stress-induced phosphorylation of ATF2 and ATF2-mediated transcription. Involved in ciliogenesis, regulates cilia length through its interaction with CCDC28B independently of mTORC2 complex. This chain is Target of rapamycin complex 2 subunit MAPKAP1, found in Rattus norvegicus (Rat).